A 297-amino-acid polypeptide reads, in one-letter code: 4-hydroxy-tetrahydrodipicolinate synthase (297 aa).

Thr-50 contacts pyruvate. Tyr-139 functions as the Proton donor/acceptor in the catalytic mechanism. Residue Lys-167 is the Schiff-base intermediate with substrate of the active site. Residue Val-209 participates in pyruvate binding.

The protein belongs to the DapA family. Homotetramer; dimer of dimers.

It localises to the cytoplasm. The catalysed reaction is L-aspartate 4-semialdehyde + pyruvate = (2S,4S)-4-hydroxy-2,3,4,5-tetrahydrodipicolinate + H2O + H(+). Its pathway is amino-acid biosynthesis; L-lysine biosynthesis via DAP pathway; (S)-tetrahydrodipicolinate from L-aspartate: step 3/4. Functionally, catalyzes the condensation of (S)-aspartate-beta-semialdehyde [(S)-ASA] and pyruvate to 4-hydroxy-tetrahydrodipicolinate (HTPA). This chain is 4-hydroxy-tetrahydrodipicolinate synthase, found in Microcystis aeruginosa (strain NIES-843 / IAM M-2473).